A 260-amino-acid chain; its full sequence is Ubiquinone/menaquinone biosynthesis C-methyltransferase UbiE (260 aa).

S-adenosyl-L-methionine is bound by residues threonine 83, aspartate 104, and 132-133 (NA).

Belongs to the class I-like SAM-binding methyltransferase superfamily. MenG/UbiE family.

The catalysed reaction is a 2-demethylmenaquinol + S-adenosyl-L-methionine = a menaquinol + S-adenosyl-L-homocysteine + H(+). The enzyme catalyses a 2-methoxy-6-(all-trans-polyprenyl)benzene-1,4-diol + S-adenosyl-L-methionine = a 5-methoxy-2-methyl-3-(all-trans-polyprenyl)benzene-1,4-diol + S-adenosyl-L-homocysteine + H(+). Its pathway is quinol/quinone metabolism; menaquinone biosynthesis; menaquinol from 1,4-dihydroxy-2-naphthoate: step 2/2. The protein operates within cofactor biosynthesis; ubiquinone biosynthesis. Its function is as follows. Methyltransferase required for the conversion of demethylmenaquinol (DMKH2) to menaquinol (MKH2) and the conversion of 2-polyprenyl-6-methoxy-1,4-benzoquinol (DDMQH2) to 2-polyprenyl-3-methyl-6-methoxy-1,4-benzoquinol (DMQH2). The polypeptide is Ubiquinone/menaquinone biosynthesis C-methyltransferase UbiE (Bartonella henselae (strain ATCC 49882 / DSM 28221 / CCUG 30454 / Houston 1) (Rochalimaea henselae)).